The following is a 586-amino-acid chain: Glutamate--tRNA ligase (586 aa).

The 'HIGH' region motif lies at 114–124 (PNPNGPWHVGH). 2 stretches are compositionally biased toward basic and acidic residues: residues 431–443 (ARGE…HEAV) and 459–468 (HPEHPDRGDR). Positions 431-468 (ARGEGPEESHEAVEVPVDDGPDEATPQVHPEHPDRGDR) are disordered.

The protein belongs to the class-I aminoacyl-tRNA synthetase family. Glutamate--tRNA ligase type 2 subfamily.

It localises to the cytoplasm. It catalyses the reaction tRNA(Glu) + L-glutamate + ATP = L-glutamyl-tRNA(Glu) + AMP + diphosphate. Functionally, catalyzes the attachment of glutamate to tRNA(Glu) in a two-step reaction: glutamate is first activated by ATP to form Glu-AMP and then transferred to the acceptor end of tRNA(Glu). This Halobacterium salinarum (strain ATCC 29341 / DSM 671 / R1) protein is Glutamate--tRNA ligase.